We begin with the raw amino-acid sequence, 129 residues long: Sulfurtransferase TusD (129 aa).

C79 serves as the catalytic Cysteine persulfide intermediate.

Belongs to the DsrE/TusD family. As to quaternary structure, heterohexamer, formed by a dimer of trimers. The hexameric TusBCD complex contains 2 copies each of TusB, TusC and TusD. The TusBCD complex interacts with TusE.

It localises to the cytoplasm. Functionally, part of a sulfur-relay system required for 2-thiolation of 5-methylaminomethyl-2-thiouridine (mnm(5)s(2)U) at tRNA wobble positions. Accepts sulfur from TusA and transfers it in turn to TusE. This chain is Sulfurtransferase TusD, found in Pectobacterium atrosepticum (strain SCRI 1043 / ATCC BAA-672) (Erwinia carotovora subsp. atroseptica).